The sequence spans 285 residues: Probable endonuclease 4 (285 aa).

Residues H69, H109, E145, D179, H182, H216, D229, H231, and E261 each contribute to the Zn(2+) site.

The protein belongs to the AP endonuclease 2 family. Requires Zn(2+) as cofactor.

The enzyme catalyses Endonucleolytic cleavage to 5'-phosphooligonucleotide end-products.. Endonuclease IV plays a role in DNA repair. It cleaves phosphodiester bonds at apurinic or apyrimidinic (AP) sites, generating a 3'-hydroxyl group and a 5'-terminal sugar phosphate. The protein is Probable endonuclease 4 of Salmonella heidelberg (strain SL476).